A 433-amino-acid polypeptide reads, in one-letter code: Pyrimidine-nucleoside phosphorylase (433 aa).

81 to 83 is a phosphate binding site; sequence KHS. K(+) contacts are provided by glycine 88 and threonine 90. Phosphate is bound by residues threonine 92, 108–110, and threonine 120; that span reads KMS. Positions 168 and 187 each coordinate substrate. K(+)-binding residues include leucine 243, alanine 246, and glutamate 255.

Belongs to the thymidine/pyrimidine-nucleoside phosphorylase family. Homodimer. The cofactor is K(+).

It catalyses the reaction uridine + phosphate = alpha-D-ribose 1-phosphate + uracil. It carries out the reaction thymidine + phosphate = 2-deoxy-alpha-D-ribose 1-phosphate + thymine. The enzyme catalyses 2'-deoxyuridine + phosphate = 2-deoxy-alpha-D-ribose 1-phosphate + uracil. Catalyzes phosphorolysis of the pyrimidine nucleosides uridine, thymidine and 2'-deoxyuridine with the formation of the corresponding pyrimidine base and ribose-1-phosphate. The sequence is that of Pyrimidine-nucleoside phosphorylase (pdp) from Staphylococcus haemolyticus (strain JCSC1435).